The chain runs to 1067 residues: Probable importin subunit beta-4 (1067 aa).

Positions 27–94 (ATRALETKYL…RSNLLDITLK (68 aa)) constitute an Importin N-terminal domain. 6 HEAT repeats span residues 159-196 (KLLL…VLES), 379-416 (GNLP…EIPT), 420-457 (KHHA…GLDK), 591-633 (PFLE…SVET), 890-927 (PFTR…FSTE), and 1013-1050 (QHLG…EIAP).

This sequence belongs to the importin beta family.

Its subcellular location is the cytoplasm. It is found in the nucleus. It localises to the nucleus envelope. Required for nuclear protein import, its predominant substrate seems to be ribosomal proteins. Binds to nucleoporins and the GTP-bound form of gsp1 (Ran). This chain is Probable importin subunit beta-4 (kap123), found in Schizosaccharomyces pombe (strain 972 / ATCC 24843) (Fission yeast).